The sequence spans 790 residues: Probable quinate dehydrogenase (quinone) (790 aa).

4 helical membrane passes run 22-42 (GSWYFLLMGLATALAGVLIVL), 48-68 (ALVYGVAFALTLVWALWDAGL), 77-94 (LMLPAAFAVLVALAWPAL), and 106-126 (AYGVATVLALAVVAGIGGMFV). The interval 171-200 (RSNGRPAAGSPGPTTPGEIANSDGNGAEDQ) is disordered. Low complexity predominate over residues 174 to 187 (GRPAAGSPGPTTPG).

This sequence belongs to the bacterial PQQ dehydrogenase family. The cofactor is pyrroloquinoline quinone.

Its subcellular location is the cell membrane. The catalysed reaction is L-quinate + a quinone = 3-dehydroquinate + a quinol. The protein operates within aromatic compound metabolism; 3,4-dihydroxybenzoate biosynthesis; 3-dehydroquinate from D-quinate (PQQ route): step 1/1. The sequence is that of Probable quinate dehydrogenase (quinone) (qumA) from Xanthomonas campestris pv. juglandis (Xanthomonas arboricola pv. juglandis).